We begin with the raw amino-acid sequence, 500 residues long: Cytochrome P450 71D7 (500 aa).

Cys-441 contributes to the heme binding site.

This sequence belongs to the cytochrome P450 family. Requires heme as cofactor.

The polypeptide is Cytochrome P450 71D7 (CYP71D7) (Solanum chacoense (Chaco potato)).